The sequence spans 211 residues: MNPQIQPQARYILPSFIEHSSFGIKESNPYNKLFEERIIFLGVQVDDASANDIMAQLLVLESLDPDRDITMYINSPGGGFTSLMAIYDTMQYVRADIQTVCLGQAASAAAVLLAAGTPGKRMALPNARVLIHQPSLQGVIQGQFSDLEIQAAEIERMRTLMETTLARHTGKDAATIRKDTDRDKILTAEEAKDYGIIDTVLEYRKLSAQTA.

The active-site Nucleophile is Ser-107. His-132 is a catalytic residue.

It belongs to the peptidase S14 family. As to quaternary structure, fourteen ClpP subunits assemble into 2 heptameric rings which stack back to back to give a disk-like structure with a central cavity, resembling the structure of eukaryotic proteasomes.

The protein localises to the cytoplasm. The enzyme catalyses Hydrolysis of proteins to small peptides in the presence of ATP and magnesium. alpha-casein is the usual test substrate. In the absence of ATP, only oligopeptides shorter than five residues are hydrolyzed (such as succinyl-Leu-Tyr-|-NHMec, and Leu-Tyr-Leu-|-Tyr-Trp, in which cleavage of the -Tyr-|-Leu- and -Tyr-|-Trp bonds also occurs).. Its function is as follows. Cleaves peptides in various proteins in a process that requires ATP hydrolysis. Has a chymotrypsin-like activity. Plays a major role in the degradation of misfolded proteins. In Mycolicibacterium paratuberculosis (strain ATCC BAA-968 / K-10) (Mycobacterium paratuberculosis), this protein is ATP-dependent Clp protease proteolytic subunit 1.